We begin with the raw amino-acid sequence, 633 residues long: Carbon monoxide dehydrogenase 2 (633 aa).

Residues Cys-44, Cys-53, Cys-56, Cys-61, and Cys-73 each coordinate [4Fe-4S] cluster. Positions 264, 343, 453, 484, and 525 each coordinate [Ni-4Fe-5S] cluster.

Belongs to the Ni-containing carbon monoxide dehydrogenase family. As to quaternary structure, homodimer. [4Fe-4S] cluster is required as a cofactor. It depends on [Ni-4Fe-5S] cluster as a cofactor.

The enzyme catalyses CO + 2 oxidized [2Fe-2S]-[ferredoxin] + H2O = 2 reduced [2Fe-2S]-[ferredoxin] + CO2 + 2 H(+). CODH oxidizes carbon monoxide coupled, via CooF, to the reduction of a hydrogen cation by a hydrogenase (possibly CooH). In Methanosarcina acetivorans (strain ATCC 35395 / DSM 2834 / JCM 12185 / C2A), this protein is Carbon monoxide dehydrogenase 2 (cooS2).